The primary structure comprises 428 residues: AP-1 complex subunit mu-1 (428 aa).

An MHD domain is found at 170-426 (KNEVFLDVIE…ITMAGEYELR (257 aa)).

The protein belongs to the adaptor complexes medium subunit family. As to quaternary structure, adaptor protein complex 1 (AP-1) is a heterotetramer composed of two large adaptins (gamma-type subunit and beta-type subunit), a medium adaptin (mu-type subunit) and a small adaptin (sigma-type subunit).

Its subcellular location is the golgi apparatus. The protein localises to the cytoplasmic vesicle. The protein resides in the clathrin-coated vesicle membrane. In terms of biological role, subunit of clathrin-associated adaptor protein complex 1 that plays a role in protein sorting at the trans-Golgi network and early endosomes (TGN/EE). The AP complexes mediate the recruitment of clathrin to membranes and the recognition of sorting signals within the cytosolic tails of transmembrane cargo molecules. Functions redundantly with AP1M2 in multiple post-Golgi trafficking pathways leading from the TGN to the vacuole, the plasma membrane, and the cell-division plane. In Arabidopsis thaliana (Mouse-ear cress), this protein is AP-1 complex subunit mu-1 (AP1M1).